The chain runs to 114 residues: Putative membrane protein insertion efficiency factor (114 aa).

It belongs to the UPF0161 family.

It localises to the cell inner membrane. Could be involved in insertion of integral membrane proteins into the membrane. The sequence is that of Putative membrane protein insertion efficiency factor from Wolinella succinogenes (strain ATCC 29543 / DSM 1740 / CCUG 13145 / JCM 31913 / LMG 7466 / NCTC 11488 / FDC 602W) (Vibrio succinogenes).